The primary structure comprises 630 residues: Alpha-1,3-mannosyltransferase MNT3 (630 aa).

Residues 1 to 14 (MLKSLKSRRLILKR) lie on the Cytoplasmic side of the membrane. A helical; Signal-anchor for type II membrane protein membrane pass occupies residues 15–31 (LVTLLLSLFFSYLIFSA). At 32-630 (SRNVTSSNKL…NDISRTWNAN (599 aa)) the chain is on the lumenal side. Asparagine 34 and asparagine 168 each carry an N-linked (GlcNAc...) asparagine glycan.

It belongs to the MNN1/MNT family.

The protein resides in the golgi apparatus membrane. The protein operates within protein modification; protein glycosylation. Functionally, mannosyltransferase involved in adding the 4th and 5th mannose residues of O-linked glycans. This chain is Alpha-1,3-mannosyltransferase MNT3 (MNT3), found in Saccharomyces cerevisiae (strain ATCC 204508 / S288c) (Baker's yeast).